The chain runs to 268 residues: 4-hydroxy-tetrahydrodipicolinate reductase (268 aa).

NAD(+) contacts are provided by residues G8–M13 and D35. NADP(+) is bound at residue R36. Residues G99–T101 and A123–F126 contribute to the NAD(+) site. Catalysis depends on H156, which acts as the Proton donor/acceptor. Residue H157 participates in (S)-2,3,4,5-tetrahydrodipicolinate binding. K160 (proton donor) is an active-site residue. G166 to T167 contacts (S)-2,3,4,5-tetrahydrodipicolinate.

This sequence belongs to the DapB family.

It localises to the cytoplasm. It carries out the reaction (S)-2,3,4,5-tetrahydrodipicolinate + NAD(+) + H2O = (2S,4S)-4-hydroxy-2,3,4,5-tetrahydrodipicolinate + NADH + H(+). The catalysed reaction is (S)-2,3,4,5-tetrahydrodipicolinate + NADP(+) + H2O = (2S,4S)-4-hydroxy-2,3,4,5-tetrahydrodipicolinate + NADPH + H(+). It functions in the pathway amino-acid biosynthesis; L-lysine biosynthesis via DAP pathway; (S)-tetrahydrodipicolinate from L-aspartate: step 4/4. In terms of biological role, catalyzes the conversion of 4-hydroxy-tetrahydrodipicolinate (HTPA) to tetrahydrodipicolinate. This is 4-hydroxy-tetrahydrodipicolinate reductase from Pseudomonas aeruginosa (strain LESB58).